Consider the following 625-residue polypeptide: tRNA uridine 5-carboxymethylaminomethyl modification enzyme MnmG (625 aa).

Residues Gly-11–Gly-16, Val-123, and Ser-178 contribute to the FAD site. Gly-271–Phe-285 contacts NAD(+). Gln-368 serves as a coordination point for FAD.

Belongs to the MnmG family. As to quaternary structure, homodimer. Heterotetramer of two MnmE and two MnmG subunits. Requires FAD as cofactor.

Its subcellular location is the cytoplasm. In terms of biological role, NAD-binding protein involved in the addition of a carboxymethylaminomethyl (cmnm) group at the wobble position (U34) of certain tRNAs, forming tRNA-cmnm(5)s(2)U34. In Bacteroides fragilis (strain ATCC 25285 / DSM 2151 / CCUG 4856 / JCM 11019 / LMG 10263 / NCTC 9343 / Onslow / VPI 2553 / EN-2), this protein is tRNA uridine 5-carboxymethylaminomethyl modification enzyme MnmG.